A 138-amino-acid chain; its full sequence is MRILGLDLGSKTIGVAVSDPLGFTAQGLTTVRRTNKEKDIAEIKKFCDEYDAKVIVIGLPKNMNGTIGPSGEIAMAFGKVIEEELNVEVKFWDERLTTVAAHKAMLEADLSRNKRKKIVDKVASTYILQGYLDMISRK.

This sequence belongs to the YqgF nuclease family.

It localises to the cytoplasm. Could be a nuclease involved in processing of the 5'-end of pre-16S rRNA. This chain is Putative pre-16S rRNA nuclease, found in Clostridium beijerinckii (strain ATCC 51743 / NCIMB 8052) (Clostridium acetobutylicum).